Reading from the N-terminus, the 235-residue chain is 1-(5-phosphoribosyl)-5-[(5-phosphoribosylamino)methylideneamino] imidazole-4-carboxamide isomerase (235 aa).

The active-site Proton acceptor is the Asp-8. Asp-128 serves as the catalytic Proton donor.

It belongs to the HisA/HisF family.

Its subcellular location is the cytoplasm. It carries out the reaction 1-(5-phospho-beta-D-ribosyl)-5-[(5-phospho-beta-D-ribosylamino)methylideneamino]imidazole-4-carboxamide = 5-[(5-phospho-1-deoxy-D-ribulos-1-ylimino)methylamino]-1-(5-phospho-beta-D-ribosyl)imidazole-4-carboxamide. Its pathway is amino-acid biosynthesis; L-histidine biosynthesis; L-histidine from 5-phospho-alpha-D-ribose 1-diphosphate: step 4/9. This is 1-(5-phosphoribosyl)-5-[(5-phosphoribosylamino)methylideneamino] imidazole-4-carboxamide isomerase from Thermus thermophilus (strain ATCC BAA-163 / DSM 7039 / HB27).